The sequence spans 124 residues: Sporulation initiation phosphotransferase F (124 aa).

Residues lysine 5–leucine 119 form the Response regulatory domain. Aspartate 10, aspartate 11, aspartate 54, and lysine 56 together coordinate Mg(2+). Aspartate 54 is modified (4-aspartylphosphate).

It depends on Mg(2+) as a cofactor. Post-translationally, phosphorylated by KinA and KinB. Dephosphorylated by RapA and RapB.

It localises to the cytoplasm. Its function is as follows. Key element in the phosphorelay regulating sporulation initiation. Phosphorylation of spo0B during sporulation initiation. This chain is Sporulation initiation phosphotransferase F (spo0F), found in Bacillus subtilis (strain 168).